Reading from the N-terminus, the 337-residue chain is Large ribosomal subunit protein uL3 (337 aa).

The protein belongs to the universal ribosomal protein uL3 family. In terms of assembly, part of the 50S ribosomal subunit. Forms a cluster with proteins L14 and L24e.

One of the primary rRNA binding proteins, it binds directly near the 3'-end of the 23S rRNA, where it nucleates assembly of the 50S subunit. The protein is Large ribosomal subunit protein uL3 of Methanospirillum hungatei JF-1 (strain ATCC 27890 / DSM 864 / NBRC 100397 / JF-1).